The chain runs to 87 residues: Acylphosphatase (87 aa).

The region spanning 2-87 (RLTALVSGTV…ATGLRDFHVY (86 aa)) is the Acylphosphatase-like domain. Active-site residues include Arg17 and Asn35.

This sequence belongs to the acylphosphatase family.

The catalysed reaction is an acyl phosphate + H2O = a carboxylate + phosphate + H(+). The polypeptide is Acylphosphatase (acyP) (Deinococcus geothermalis (strain DSM 11300 / CIP 105573 / AG-3a)).